A 1050-amino-acid chain; its full sequence is TSC22 domain family protein 1 (1050 aa).

The required for interaction with TGFBR1 and promotion of TGF-beta signaling stretch occupies residues 1-99 (MHQPPESTAA…SQAQLQGQPL (99 aa)). Disordered regions lie at residues 22 to 111 (MAHP…KKSG), 126 to 285 (ISSN…VSSA), 445 to 479 (QTPTEASSSERESTSGSSVSSSVSTLSHYTESVGS), 511 to 531 (DFSSPGPQSISQSQMSQVQLQ), 581 to 609 (LAQPQLPYPQPAPPVQTPLPGAPPQQLQY), 720 to 740 (VQPPSTQVTPSVVQQGAPPSS), 795 to 847 (QLPT…GSLV), and 879 to 919 (SLAQ…VSDG). The segment covering 38–55 (ASALSAAGTGVSGAAPSS) has biased composition (low complexity). Residues 58–71 (FPPPSSLLQPPPPA) are compositionally biased toward pro residues. Positions 85–97 (SLNLLSQAQLQGQ) are enriched in low complexity. Over residues 134–143 (EDTESYDDLD) the composition is skewed to acidic residues. Residues 217–241 (HPHHLHHHHHIHHGHHLHHGHHHSS) show a composition bias toward basic residues. A Phosphoserine modification is found at S265. Low complexity predominate over residues 458–476 (TSGSSVSSSVSTLSHYTES). The span at 586–603 (LPYPQPAPPVQTPLPGAP) shows a compositional bias: pro residues. The segment covering 906-919 (LSGDSGGVSAVSDG) has biased composition (low complexity). A leucine-zipper region spans residues 983-1004 (LKEQIKELIEKNSQLEQENNLL). The tract at residues 1015-1050 (QFQAQLQTGSPPATTQPQGTTQPPAQPASQGSGSTA) is disordered. Residues 1021-1050 (QTGSPPATTQPQGTTQPPAQPASQGSGSTA) show a composition bias toward low complexity.

This sequence belongs to the TSC-22/Dip/Bun family. In terms of assembly, forms homodimers. Forms heterodimers. Component of a complex composed of TSC22D1 (via N-terminus), TGFBR1 and TGFBR2; the interaction between TSC22D1 and TGFBR1 is inhibited by SMAD7 and promoted by TGFB1. Interacts with SMAD7; the interaction requires TGF-beta and the interaction is inhibited by TGFBR1. Interacts with TPT1/fortilin; interaction results in the destabilization of TSC22D1 protein and prevents TSC22D1-mediated apoptosis. Interacts with SMAD4 (via N-terminus). Interacts with ACVRL1/ALK1, ACVR1/ALK2, BMPR1A/ALK3, ACVR1B/ALK4, BMPR1B/ALK6, ACVR2A/ACTRII, and BMPR2. Interacts with SMAD6. Interacts with TFE3; the interaction is enhanced in the presence of TGF-beta. Forms a heterodimer with TSC22D4/THG1. As to quaternary structure, forms a heterodimer with TSC22D4/THG1. Interacts with histone H1-2. Interacts with GNL3. Ubiquitously expressed, abundantly expressed in testis, ovary, uterus, and lung. Expressed in cardiomyocytes.

The protein resides in the cytoplasm. It is found in the nucleus. It localises to the cell membrane. Its subcellular location is the mitochondrion. Transcriptional repressor. Acts on the C-type natriuretic peptide (CNP) promoter. Acts to promote CASP3-mediated apoptosis. Positively regulates TGF-beta signaling by interacting with SMAD7 which inhibits binding of SMAD7 to TGFBR1, preventing recruitment of SMURF ubiquitin ligases to TGFBR1 and inhibiting SMURF-mediated ubiquitination and degradation of TGFBR1. Contributes to enhancement of TGF-beta signaling by binding to and modulating the transcription activator activity of SMAD4. Promotes TGF-beta-induced transcription of COL1A2; via its interaction with TFE3 at E-boxes in the gene proximal promoter. Plays a role in the repression of hematopoietic precursor cell growth. Promotes IL2 deprivation-induced apoptosis in T-lymphocytes, via repression of TSC22D3/GILZ transcription and activation of the caspase cascade. Its function is as follows. May act to negatively regulate TGFB3 signaling and thereby inhibit cell death in mammary gland cells. Functionally, positively regulates cell death in response to TGFB3 during mammary gland involution. This chain is TSC22 domain family protein 1, found in Rattus norvegicus (Rat).